The following is a 205-amino-acid chain: Large ribosomal subunit protein uL4 (205 aa).

The disordered stretch occupies residues 43–77 (RRRSGTASTKGRSDVAGSRAKLFRQKGTGRARRGD). Residues 63 to 73 (KLFRQKGTGRA) are compositionally biased toward basic residues.

Belongs to the universal ribosomal protein uL4 family. Part of the 50S ribosomal subunit.

One of the primary rRNA binding proteins, this protein initially binds near the 5'-end of the 23S rRNA. It is important during the early stages of 50S assembly. It makes multiple contacts with different domains of the 23S rRNA in the assembled 50S subunit and ribosome. In terms of biological role, forms part of the polypeptide exit tunnel. The polypeptide is Large ribosomal subunit protein uL4 (Desulfosudis oleivorans (strain DSM 6200 / JCM 39069 / Hxd3) (Desulfococcus oleovorans)).